Reading from the N-terminus, the 601-residue chain is MAKQSNIRNFSIIAHIDHGKSTLADRILDVTGLVTERDKRDQYLDRMELERERGITIKAQAVRIPYKAADGREYVLNLIDTPGHVDFSYEVSRSLAACEGALLVVDATQGVEAQTLANVFLALDHDHEIIPVLNKIDLPSSDIARVKAEIEDGIGLDAAEAVEVSAKTGLNVDKVLEAIVERLPAPEGDSDAPLQALIFDSWYDSYQGVVVMFRVMHGTIRKGDSIQMMATGKKYEVTRLGVFSPEAKDVDCFTAGDVGFLCAAIKELGDAKVGDTVTHSSRPAATPLPGFKEVKPMVFCGLYPTDSSEYEQLKYALEKLQLNDAAFSFEAETSQALGFGYRCGFLGLLHMEIVQERLEREFNIGLIATAPSVVYKVLTVDGEEKYIENPAALPDPTKIEGLYEPYVRMEIHVPNEFVGNVFKLCEEKRGIQKDMRYLAVNRVIITYELPFAEIVYDFFDKLKSLTRGYASMDYEIIDYRQSNLVKLDMLINGDPVDALACIVHRDKAYYQGRAIALRLKRTIPRQMFEVVVQAAIGNKIIARERNAPLRKNVTAKCYGGDITRKRKLLEKQKEGKKRMKRMGNVELPQEAFLAALQVDDE.

A tr-type G domain is found at 5–187; the sequence is SNIRNFSIIA…AIVERLPAPE (183 aa). GTP is bound by residues 17-22 and 134-137; these read DHGKST and NKID.

This sequence belongs to the TRAFAC class translation factor GTPase superfamily. Classic translation factor GTPase family. LepA subfamily.

The protein resides in the cell inner membrane. The catalysed reaction is GTP + H2O = GDP + phosphate + H(+). Required for accurate and efficient protein synthesis under certain stress conditions. May act as a fidelity factor of the translation reaction, by catalyzing a one-codon backward translocation of tRNAs on improperly translocated ribosomes. Back-translocation proceeds from a post-translocation (POST) complex to a pre-translocation (PRE) complex, thus giving elongation factor G a second chance to translocate the tRNAs correctly. Binds to ribosomes in a GTP-dependent manner. The protein is Elongation factor 4 of Oleidesulfovibrio alaskensis (strain ATCC BAA-1058 / DSM 17464 / G20) (Desulfovibrio alaskensis).